Reading from the N-terminus, the 1342-residue chain is DNA-directed RNA polymerase subunit beta (1342 aa).

Belongs to the RNA polymerase beta chain family. The RNAP catalytic core consists of 2 alpha, 1 beta, 1 beta' and 1 omega subunit. When a sigma factor is associated with the core the holoenzyme is formed, which can initiate transcription.

The enzyme catalyses RNA(n) + a ribonucleoside 5'-triphosphate = RNA(n+1) + diphosphate. Its function is as follows. DNA-dependent RNA polymerase catalyzes the transcription of DNA into RNA using the four ribonucleoside triphosphates as substrates. This chain is DNA-directed RNA polymerase subunit beta, found in Salmonella agona (strain SL483).